A 271-amino-acid polypeptide reads, in one-letter code: Formamidopyrimidine-DNA glycosylase (271 aa).

Residue Pro-2 is the Schiff-base intermediate with DNA of the active site. Glu-3 functions as the Proton donor in the catalytic mechanism. Lys-58 functions as the Proton donor; for beta-elimination activity in the catalytic mechanism. DNA-binding residues include His-92, Arg-111, and Lys-152. Residues 237 to 271 form an FPG-type zinc finger; the sequence is YVYGKVQKPCKICNNTITLIRQNGRSTYFCNACQN. The active-site Proton donor; for delta-elimination activity is the Arg-261.

Belongs to the FPG family. As to quaternary structure, monomer. The cofactor is Zn(2+).

It carries out the reaction Hydrolysis of DNA containing ring-opened 7-methylguanine residues, releasing 2,6-diamino-4-hydroxy-5-(N-methyl)formamidopyrimidine.. It catalyses the reaction 2'-deoxyribonucleotide-(2'-deoxyribose 5'-phosphate)-2'-deoxyribonucleotide-DNA = a 3'-end 2'-deoxyribonucleotide-(2,3-dehydro-2,3-deoxyribose 5'-phosphate)-DNA + a 5'-end 5'-phospho-2'-deoxyribonucleoside-DNA + H(+). Functionally, involved in base excision repair of DNA damaged by oxidation or by mutagenic agents. Acts as a DNA glycosylase that recognizes and removes damaged bases. Has a preference for oxidized purines, such as 7,8-dihydro-8-oxoguanine (8-oxoG). Has AP (apurinic/apyrimidinic) lyase activity and introduces nicks in the DNA strand. Cleaves the DNA backbone by beta-delta elimination to generate a single-strand break at the site of the removed base with both 3'- and 5'-phosphates. The sequence is that of Formamidopyrimidine-DNA glycosylase from Wolbachia sp. subsp. Brugia malayi (strain TRS).